The primary structure comprises 736 residues: Phosphoribosylformylglycinamidine synthase subunit PurL (736 aa).

His-50 is a catalytic residue. ATP-binding residues include Tyr-53 and Lys-92. Residue Glu-94 coordinates Mg(2+). Residues 95 to 98 (SHNH) and Arg-117 each bind substrate. The Proton acceptor role is filled by His-96. Asp-118 provides a ligand contact to Mg(2+). Residue Gln-241 coordinates substrate. Asp-269 contacts Mg(2+). Residue 313-315 (ESQ) participates in substrate binding. Residues Asp-495 and Gly-532 each coordinate ATP. Asn-533 provides a ligand contact to Mg(2+). Ser-535 provides a ligand contact to substrate.

This sequence belongs to the FGAMS family. In terms of assembly, monomer. Part of the FGAM synthase complex composed of 1 PurL, 1 PurQ and 2 PurS subunits.

It localises to the cytoplasm. It catalyses the reaction N(2)-formyl-N(1)-(5-phospho-beta-D-ribosyl)glycinamide + L-glutamine + ATP + H2O = 2-formamido-N(1)-(5-O-phospho-beta-D-ribosyl)acetamidine + L-glutamate + ADP + phosphate + H(+). The protein operates within purine metabolism; IMP biosynthesis via de novo pathway; 5-amino-1-(5-phospho-D-ribosyl)imidazole from N(2)-formyl-N(1)-(5-phospho-D-ribosyl)glycinamide: step 1/2. Part of the phosphoribosylformylglycinamidine synthase complex involved in the purines biosynthetic pathway. Catalyzes the ATP-dependent conversion of formylglycinamide ribonucleotide (FGAR) and glutamine to yield formylglycinamidine ribonucleotide (FGAM) and glutamate. The FGAM synthase complex is composed of three subunits. PurQ produces an ammonia molecule by converting glutamine to glutamate. PurL transfers the ammonia molecule to FGAR to form FGAM in an ATP-dependent manner. PurS interacts with PurQ and PurL and is thought to assist in the transfer of the ammonia molecule from PurQ to PurL. The polypeptide is Phosphoribosylformylglycinamidine synthase subunit PurL (Bartonella tribocorum (strain CIP 105476 / IBS 506)).